Reading from the N-terminus, the 410-residue chain is Arginine deiminase (410 aa).

Cysteine 399 serves as the catalytic Amidino-cysteine intermediate.

The protein belongs to the arginine deiminase family.

The protein localises to the cytoplasm. It carries out the reaction L-arginine + H2O = L-citrulline + NH4(+). Its pathway is amino-acid degradation; L-arginine degradation via ADI pathway; carbamoyl phosphate from L-arginine: step 1/2. The chain is Arginine deiminase from Listeria monocytogenes serotype 4a (strain HCC23).